The sequence spans 753 residues: Subtilisin-like protease SBT3.17 (753 aa).

The first 29 residues, 1-29, serve as a signal peptide directing secretion; it reads MGNSFLIADTSSLVIGLLLILNGVFISAA. Residues 30-116 constitute a propeptide, activation peptide; it reads KHYGLNKIHI…VVPSRVMRLK (87 aa). The region spanning 38–115 is the Inhibitor I9 domain; sequence HIVHLGAKQH…RVVPSRVMRL (78 aa). An N-linked (GlcNAc...) asparagine glycan is attached at N97. The 484-residue stretch at 120-603 folds into the Peptidase S8 domain; that stretch reads TFDYLGLLPT…GGLINPEKVT (484 aa). D150 acts as the Charge relay system in catalysis. The N-linked (GlcNAc...) asparagine glycan is linked to N161. H227 acts as the Charge relay system in catalysis. The N-linked (GlcNAc...) asparagine glycan is linked to N369. The active-site Charge relay system is S534. N-linked (GlcNAc...) asparagine glycans are attached at residues N639, N704, and N737.

The protein belongs to the peptidase S8 family.

The protein resides in the secreted. The chain is Subtilisin-like protease SBT3.17 from Arabidopsis thaliana (Mouse-ear cress).